A 516-amino-acid chain; its full sequence is Cytochrome P450 monooxygenase lcsI (516 aa).

A helical membrane pass occupies residues 20–42 (ICVAAGCAFALSLLYLYVRALYL). Residues N131, N184, N415, N420, and N442 are each glycosylated (N-linked (GlcNAc...) asparagine). A heme-binding site is contributed by C456.

This sequence belongs to the cytochrome P450 family. It depends on heme as a cofactor.

Its subcellular location is the membrane. The protein operates within secondary metabolite biosynthesis. Cytochrome P450 monooxygenase; part of the gene cluster that mediates the biosynthesis of the lipopeptide antibiotics leucinostatins that show extensive biological activities, including antimalarial, antiviral, antibacterial, antifungal, and antitumor activities, as well as phytotoxic. Leucinostatin A contains nine amino acid residues, including the unusual amino acid 4-methyl-L-proline (MePro), 2-amino-6-hydroxy-4-methyl-8-oxodecanoic acid (AHyMeOA), 3-hydroxyleucine (HyLeu), alpha-aminoisobutyric acid (AIB), beta-Ala, a 4-methylhex-2-enoic acid at the N-terminus as well as a N1,N1-dimethylpropane-1,2-diamine (DPD) at the C-terminus. The biosynthesis of leucinostatins is probably initiated with the assembly of 4-methylhex-2-enoic acid by a reducing PKS. Two reducing polyketide synthases, lcsB and lcsC, have been identified in the cluster and it is not clear which is the one that assembles 4-methylhex-2-enoic acid since both contain KS, AT, DH, cMT, ER, KR and ACP domains. The polyketide residue might be transferred to the NRPS lcsA, mediated by two additional enzymes, the acyl-CoA ligase lcsD and the thioesterase lcsE. The linear polyketide carboxylic acid, which is released from PKS, is converted to a CoA thioester by lcsD, and then lcsE hydrolyzes the thiol bond and shuttles the polyketide intermediate to lcsA. The C domain of the first module catalyzed the condensation of 4-methylhex-2-enoic acid and MePro carried by domain A1, followed by successive condensations of nine amino acids to trigger the elongation of the linear peptide. A5 and A6 domains of lcsA are proposed to incorporate leucine, A2 AHyMeOA, and A3 incorporates HyLeu. A4, A7 and A8 incorporate AIB. The AHyMeOA in leucinostatin A activated by the A2 might be produced by the second PKS (lcsB or lcsC) present within the cluster. The MePro is probably produced via leucine cyclization and may originate from a separate pathway, independent of the cluster. Another nonproteinogenic amino acid, beta-Ala, could be produced by an aspartic acid decarboxylase also localized outside of the cluster. Two candidates are VFPBJ_01400 and VFPBJ_10476. The final peptide scaffold may be released by the NAD(P)H-dependent thioester reductase (TE) at the C-terminal region of lcsA. Transamination of the lcsA product by the transaminase lcsP may produce DPD at the C-terminus. Further hydroxylation steps performed alternatively by the cytochrome P450 monooxygenases lcsI, lcsK and lcsN then yield the non-methylated leucinostatins precursor. It is also possible that leucines can be hydroxylated prior to their incorporation into the peptide. Varying extents of methylation then lead to the formation of leucinostatins A and B. This chain is Cytochrome P450 monooxygenase lcsI, found in Purpureocillium lilacinum (Paecilomyces lilacinus).